A 44-amino-acid polypeptide reads, in one-letter code: Cytochrome b559 subunit beta (44 aa).

The helical transmembrane segment at W19–A35 threads the bilayer. A heme-binding site is contributed by H23.

This sequence belongs to the PsbE/PsbF family. Heterodimer of an alpha subunit and a beta subunit. PSII is composed of 1 copy each of membrane proteins PsbA, PsbB, PsbC, PsbD, PsbE, PsbF, PsbH, PsbI, PsbJ, PsbK, PsbL, PsbM, PsbT, PsbX, PsbY, PsbZ, Psb30/Ycf12, peripheral proteins PsbO, CyanoQ (PsbQ), PsbU, PsbV and a large number of cofactors. It forms dimeric complexes. Heme b is required as a cofactor.

It localises to the cellular thylakoid membrane. This b-type cytochrome is tightly associated with the reaction center of photosystem II (PSII). PSII is a light-driven water:plastoquinone oxidoreductase that uses light energy to abstract electrons from H(2)O, generating O(2) and a proton gradient subsequently used for ATP formation. It consists of a core antenna complex that captures photons, and an electron transfer chain that converts photonic excitation into a charge separation. The polypeptide is Cytochrome b559 subunit beta (Crocosphaera subtropica (strain ATCC 51142 / BH68) (Cyanothece sp. (strain ATCC 51142))).